A 122-amino-acid polypeptide reads, in one-letter code: Cupin 2 conserved barrel domain-containing protein (122 aa).

The interval 55–119 (PGGVTTAEDH…DSPVEIVSIW (65 aa)) is cupin 2 conserved barrel. The Zn(2+) site is built by D63, H65, E69, and H103.

Zn(2+) serves as cofactor.

It carries out the reaction N(6)-hydroxy-L-lysine + L-glutamate + ATP = 1-L-glutamo-2-N(6-)L-lysinohydrazine + AMP + diphosphate + 2 H(+). With respect to regulation, inhibited by 1,10-phenanthroline (OP). Its function is as follows. Catalyzes hydrazine (N-N) bond formation from an unstable ester intermediate, the product of the ATP-dependent condensation of L-N(6)-OH-lysine and L-glutamine substrates by a methionyl-tRNA synthase-like protein. This Rhodococcus jostii (strain RHA1) protein is Cupin 2 conserved barrel domain-containing protein.